A 493-amino-acid polypeptide reads, in one-letter code: Cytochrome P450 2E1 (493 aa).

Phe298 to Thr303 contacts substrate. Cys437 provides a ligand contact to heme.

This sequence belongs to the cytochrome P450 family. As to quaternary structure, interacts with chaperones HSP70 and HSP90; this interaction is required for initial targeting to mitochondria. It depends on heme as a cofactor.

Its subcellular location is the endoplasmic reticulum membrane. It is found in the microsome membrane. It localises to the mitochondrion inner membrane. It catalyses the reaction an organic molecule + reduced [NADPH--hemoprotein reductase] + O2 = an alcohol + oxidized [NADPH--hemoprotein reductase] + H2O + H(+). The catalysed reaction is (5Z,8Z,11Z)-eicosatrienoate + reduced [NADPH--hemoprotein reductase] + O2 = 19-hydroxy-(5Z,8Z,11Z)-eicosatrienoate + oxidized [NADPH--hemoprotein reductase] + H2O + H(+). It carries out the reaction (5Z,8Z,11Z,14Z,17Z)-eicosapentaenoate + reduced [NADPH--hemoprotein reductase] + O2 = 19-hydroxy-(5Z,8Z,11Z,14Z,17Z)-eicosapentaenoate + oxidized [NADPH--hemoprotein reductase] + H2O + H(+). The enzyme catalyses (4Z,7Z,10Z,13Z,16Z,19Z)-docosahexaenoate + reduced [NADPH--hemoprotein reductase] + O2 = 21-hydroxy-(4Z,7Z,10Z,13Z,16Z,19Z)-docosahexaenoate + oxidized [NADPH--hemoprotein reductase] + H2O + H(+). It catalyses the reaction dodecanoate + reduced [NADPH--hemoprotein reductase] + O2 = 11-hydroxydodecanoate + oxidized [NADPH--hemoprotein reductase] + H2O + H(+). The catalysed reaction is tetradecanoate + reduced [NADPH--hemoprotein reductase] + O2 = 13-hydroxytetradecanoate + oxidized [NADPH--hemoprotein reductase] + H2O + H(+). It carries out the reaction 4-nitrophenol + NADPH + O2 + H(+) = 4-nitrocatechol + NADP(+) + H2O. It functions in the pathway lipid metabolism; fatty acid metabolism. With respect to regulation, the omega-1 hydroxylase activity is stimulated by cytochrome b5. A cytochrome P450 monooxygenase involved in the metabolism of fatty acids. Mechanistically, uses molecular oxygen inserting one oxygen atom into a substrate, and reducing the second into a water molecule, with two electrons provided by NADPH via cytochrome P450 reductase (NADPH--hemoprotein reductase). Catalyzes the hydroxylation of carbon-hydrogen bonds. Hydroxylates fatty acids specifically at the omega-1 position displaying the highest catalytic activity for saturated fatty acids. May be involved in the oxidative metabolism of xenobiotics. The sequence is that of Cytochrome P450 2E1 (CYP2E1) from Macaca mulatta (Rhesus macaque).